A 935-amino-acid polypeptide reads, in one-letter code: ABC transporter A family member 7 (935 aa).

7 helical membrane passes run 34–54 (LIMIPFYLCILLVIIQILFDT), 338–358 (IASLIGPLFFTWVILLLFPVI), 392–412 (FLTISVLYVICLMIFGSAIGL), 424–444 (FVFYFLYLNLQIALAFLVSSV), 454–474 (ASYIYVFGSGLLGLFLLNFLI), 483–503 (WIIVMELYPGFSLYRGLYELA), and 528–548 (DDVFYIIVVEWFLALIAAYYI). Residues 571–591 (SLRRPSLQRQGSKVSVDMEKP) are disordered. The ABC transporter domain maps to 613-850 (IVCDNLKKVY…YGGSYVFTMT (238 aa)). ATP is bound at residue 651–658 (GPNGAGKT).

Belongs to the ABC transporter superfamily. ABCA family. CPR flippase (TC 3.A.1.211) subfamily.

The protein resides in the membrane. The sequence is that of ABC transporter A family member 7 (ABCA7) from Arabidopsis thaliana (Mouse-ear cress).